A 396-amino-acid polypeptide reads, in one-letter code: Zinc metalloproteinase nas-19 (396 aa).

The N-terminal stretch at 1–20 is a signal peptide; the sequence is MVRLIHLIGAIILLFSYAYC. In terms of domain architecture, Peptidase M12A spans 38–231; sequence RVKRQFERLG…YKINQYYGCW (194 aa). A glycan (N-linked (GlcNAc...) asparagine) is linked at N79. Cystine bridges form between C82–C230, C105–C130, C232–C252, and C254–C263. H138 is a Zn(2+) binding site. E139 is a catalytic residue. 2 residues coordinate Zn(2+): H142 and H148. The region spanning 225–264 is the EGF-like domain; that stretch reads NQYYGCWCSKQLECKNGGYTSPSDCSRCNCPKGFFGNLCD. N310 is a glycosylation site (N-linked (GlcNAc...) asparagine).

Requires Zn(2+) as cofactor.

Its subcellular location is the secreted. Its function is as follows. Metalloprotease. The sequence is that of Zinc metalloproteinase nas-19 (nas-19) from Caenorhabditis elegans.